A 371-amino-acid chain; its full sequence is Sporulation-specific protein 2 (371 aa).

It is found in the spore wall. Its function is as follows. Essential for sporulation and seems to have a role at the time of, or after, initiation of nuclear division. Appears to have a role in outer spore wall formation. This Saccharomyces cerevisiae (strain ATCC 204508 / S288c) (Baker's yeast) protein is Sporulation-specific protein 2 (SSP2).